The following is a 375-amino-acid chain: Delta(9) fatty acid conjugase-like enzyme (375 aa).

Transmembrane regions (helical) follow at residues 38–58 (LSLSFYYLFYDLIKVCILFYV) and 66–86 (LPYSLSCIVWPLYWFFQGAFL). The short motif at 94-98 (HECGH) is the Histidine box-1 element. Positions 130 to 134 (HRNHH) match the Histidine box-2 motif. Transmembrane regions (helical) follow at residues 168 to 188 (FGLVVNMVFELTFGYPSYLIF), 219 to 239 (VFFSDVGICIVLYALYRIAIA), and 241 to 261 (GAMLVLYVYGLPWVVMSAFIF). Residues 307–311 (HVVHH) carry the Histidine box-3 motif.

Belongs to the fatty acid desaturase type 1 family.

The protein resides in the membrane. Functionally, involved in the biosynthesis of dimorphecolic acid (9-OH-18:2(10E,12E)). Catalyzes the formation of the C-9 hydroxyl group and the (E)-delta(10) double bond from the trans-linoleic acid (16:2(9Z,12E)) produced by FAD2-1. Very limited activity with cis-linoleic acid (16:2(9Z,12Z)). The sequence is that of Delta(9) fatty acid conjugase-like enzyme from Dimorphotheca sinuata (African daisy).